The following is a 326-amino-acid chain: Prenyl transferase nodC (326 aa).

The chain crosses the membrane as a helical span at residues 8-28 (LAAVLFSALFSLGVILVHLPW). His95 is a binding site for isopentenyl diphosphate. Asp102 and Asp106 together coordinate Mg(2+). Arg111 is a dimethylallyl diphosphate binding site. A glycan (N-linked (GlcNAc...) asparagine) is linked at Asn139. Residue Lys195 participates in dimethylallyl diphosphate binding. N-linked (GlcNAc...) asparagine glycosylation is present at Asn210.

It belongs to the FPP/GGPP synthase family.

The protein resides in the membrane. The protein operates within secondary metabolite biosynthesis. Cytochrome P450 monooxygenase; part of the gene cluster that mediates the biosynthesis of the indole diterpenes nodulisporic acids (NA). Nodulisporic acid A (NAA) and its chemically modified derivatives are of particular significance because of their highly potent insecticidal activity against blood-feeding arthropods and lack of observable adverse effects on mammals, in particular the tremogenicity associated with the paspaline-derived IDTs is not observed. The geranylgeranyl diphosphate (GGPP) synthase ggs1, localized outside of the cluster, is proposed to catalyze the first step in nodulisporic acid biosynthesis via conversion of farnesyl pyrophosphate and isopentyl pyrophosphate into geranylgeranyl pyrophosphate (GGPP). Condensation of indole-3-glycerol phosphate with GGPP by the prenyl transferase nodC then forms 3-geranylgeranylindole (3-GGI). Epoxidation by the FAD-dependent monooxygenase nodM leads to a single-epoxidized-GGI that is substrate of the terpene cyclase nodB for cyclization to yield emindole SB. The terminal methyl carbon, C28, of emindole SB is then oxidized by the cytochrome P450 monooxygenase nodW to produce nodulisporic acid F (NAF), the pentacyclic core of NAA. NAF is converted to nodulisporic acid E (NAE) via prenylation. This step is probably performed by one of the indole diterpene prenyltransferases nodD1 or nodD2. Several oxidation steps performed by the FAD-linked oxidoreductase nodO and one of the cytochrome P450 monooxygenase nodR, nodX or nodZ further convert NAE to nodulisporic acid D (NAD). NAD is substrate of cytochrome P450 monooxygenase nodJ to produce the precursor of nodulisporic acid C (NAC), converted to NAC by one of the indole diterpene prenyltransferases nodD1 or nodD2. The FAD-dependent monooxygenase nodY2 then oxidizes NAC to nodulisporic acid B (NAB). Finally NAB is converted to NAA by one of the cytochrome P450 monooxygenases nodR, nodX or nodZ. The polypeptide is Prenyl transferase nodC (Hypoxylon pulicicidum).